We begin with the raw amino-acid sequence, 208 residues long: MGRKRSASSSRWLAEHFKDQFVQKAHKQKLRSRAYFKLDEIQQTDRLFKHGMTVVDLGAAPGGWSQYVVTQIGDKGRVIACDILDMNPIVGVDFLQGDFCEESVLNALLERVGEGKVDVVMSDMAPNFSGMSSVDIPRAMYLVELALDMCRQVLAPKGSFVVKVFQGEGFDDYLREIRSLFNVVKVRKPEASRDRSREVYIVATGYKG.

S-adenosyl-L-methionine-binding residues include Gly-62, Trp-64, Asp-82, Asp-98, and Asp-123. The active-site Proton acceptor is Lys-163.

Belongs to the class I-like SAM-binding methyltransferase superfamily. RNA methyltransferase RlmE family.

It is found in the cytoplasm. The catalysed reaction is uridine(2552) in 23S rRNA + S-adenosyl-L-methionine = 2'-O-methyluridine(2552) in 23S rRNA + S-adenosyl-L-homocysteine + H(+). Specifically methylates the uridine in position 2552 of 23S rRNA at the 2'-O position of the ribose in the fully assembled 50S ribosomal subunit. This chain is Ribosomal RNA large subunit methyltransferase E, found in Glaesserella parasuis serovar 5 (strain SH0165) (Haemophilus parasuis).